The chain runs to 330 residues: Peptide transport system ATP-binding protein SapD (330 aa).

The ABC transporter domain occupies 6-259; sequence IRNLTIEFKT…PHHPYTQALI (254 aa). Residue 40–47 coordinates ATP; that stretch reads GESGSGKS.

It belongs to the ABC transporter superfamily.

The protein resides in the cell inner membrane. Involved in a peptide intake transport system that plays a role in the resistance to antimicrobial peptides. This is Peptide transport system ATP-binding protein SapD from Salmonella typhimurium (strain LT2 / SGSC1412 / ATCC 700720).